The sequence spans 151 residues: 3-hydroxyacyl-[acyl-carrier-protein] dehydratase FabZ (151 aa).

H49 is a catalytic residue.

This sequence belongs to the thioester dehydratase family. FabZ subfamily.

It is found in the cytoplasm. It catalyses the reaction a (3R)-hydroxyacyl-[ACP] = a (2E)-enoyl-[ACP] + H2O. Its function is as follows. Involved in unsaturated fatty acids biosynthesis. Catalyzes the dehydration of short chain beta-hydroxyacyl-ACPs and long chain saturated and unsaturated beta-hydroxyacyl-ACPs. The protein is 3-hydroxyacyl-[acyl-carrier-protein] dehydratase FabZ of Bordetella parapertussis (strain 12822 / ATCC BAA-587 / NCTC 13253).